Reading from the N-terminus, the 141-residue chain is Putative pre-16S rRNA nuclease (141 aa).

This sequence belongs to the YqgF nuclease family.

Its subcellular location is the cytoplasm. Functionally, could be a nuclease involved in processing of the 5'-end of pre-16S rRNA. The polypeptide is Putative pre-16S rRNA nuclease (Amoebophilus asiaticus (strain 5a2)).